The chain runs to 276 residues: Ice-binding protein (276 aa).

A signal peptide spans 1–24 (MKILKRIPVLAVLLVGLMTNCSND). The Ice-binding site motif (T-A/G-X-T/N) 1 motif lies at 79–82 (TGIT). A disulfide bridge links cysteine 107 with cysteine 124. 2 consecutive short sequence motifs (ice-binding site motif (T-A/G-X-T/N)) follow at residues 245–248 (TGIN) and 263–266 (TAVT).

The protein belongs to the ice-binding protein family. Monomer.

The protein resides in the secreted. Has antifreeze activity for survival in a subzero environment. Binds to the surface of ice crystals and inhibits their growth. Has high thermal hysteresis (TH) activity, which is the ability to lower the freezing point of an aqueous solution below its melting point, and thus the freezing of the cell fluid can be prevented protecting the organism from ice damage. The TH activity of this protein is 2.2 degrees Celsius at 5 uM and 2.5 degrees Celsius at 50 uM. The sequence is that of Ice-binding protein from Flavobacterium frigoris (strain PS1).